The sequence spans 91 residues: Acylphosphatase (91 aa).

The Acylphosphatase-like domain maps to Cys-5–Leu-91. Residues Arg-20 and Asn-38 contribute to the active site.

Belongs to the acylphosphatase family.

The catalysed reaction is an acyl phosphate + H2O = a carboxylate + phosphate + H(+). This is Acylphosphatase (acyP) from Vibrio cholerae serotype O1 (strain ATCC 39315 / El Tor Inaba N16961).